The primary structure comprises 547 residues: Mucin-13 (547 aa).

Residues 1-210 (MSQSSGGTST…TVTSSSSTGS (210 aa)) are compositionally biased toward low complexity. The segment at 1–218 (MSQSSGGTST…GSNDPCNSNP (218 aa)) is disordered. Residues 210-249 (SNDPCNSNPCKSPASCVKLYDSYFCLCLEGYYYNNSSSCV) enclose the EGF-like 1 domain. 3 disulfide bridges follow: Cys214–Cys225, Cys219–Cys234, and Cys236–Cys248. Asn243, Asn244, and Asn263 each carry an N-linked (GlcNAc...) asparagine glycan. One can recognise an SEA domain in the interval 250-366 (KGTTFPGEIG…ERYFQQDRCD (117 aa)). 2 consecutive EGF-like domains span residues 361–401 (QQDR…PFCV) and 401–441 (VAPT…GKCE). Intrachain disulfides connect Cys365/Cys378, Cys370/Cys384, Cys386/Cys400, Cys409/Cys427, and Cys429/Cys440. The helical transmembrane segment at 459-479 (ILTIVGTIAGAFILILLIVFI) threads the bilayer. Over 480 to 547 (VSMRSKNKKK…NHRSMPRPDY (68 aa)) the chain is Cytoplasmic. The tract at residues 525-547 (KTGVPSQTSNPYANHRSMPRPDY) is disordered.

As to quaternary structure, homodimer of beta subunits. In terms of processing, cleaved into two subunits, alpha and beta, probably between the first EGF domain and the SEA domain. Beta subunit contains the cytoplasmic tail and alpha subunit the extracellular tail. The homooligomerization into dimers is dependent on intrachain disulfide bonds. Post-translationally, highly glycosylated.

The protein resides in the cell membrane. It localises to the secreted. In terms of biological role, epithelial and hemopoietic transmembrane mucin that may play a role in cell signaling. This is Mucin-13 (Muc13) from Rattus norvegicus (Rat).